The following is a 111-amino-acid chain: Toxin 3FTx-Tri2 (111 aa).

An N-terminal signal peptide occupies residues 1–19 (MKTLLLALVVLAFVCLGSA). Positions 20–34 (DQVGLGKEQIDRGRR) are excised as a propeptide. Glutamine 35 is modified (pyrrolidone carboxylic acid). 5 disulfide bridges follow: cysteine 44–cysteine 68, cysteine 47–cysteine 55, cysteine 61–cysteine 87, cysteine 91–cysteine 102, and cysteine 103–cysteine 108.

It belongs to the three-finger toxin family. Ancestral subfamily. Boigatoxin sub-subfamily. Expressed by the venom gland.

The protein localises to the secreted. Potent postsynaptic neurotoxin. Displays readily reversible competitive antagonism at the nicotinic acetylcholine receptor (nAChR). This is Toxin 3FTx-Tri2 from Trimorphodon biscutatus (Western lyre snake).